The following is a 548-amino-acid chain: Folylpolyglutamate synthase (548 aa).

130 to 133 (GKGS) is an ATP binding site. Residues Ser157, Glu234, and His262 each coordinate Mg(2+). 2 residues coordinate ATP: Arg382 and Asp396.

Belongs to the folylpolyglutamate synthase family. The cofactor is a monovalent cation.

The protein localises to the mitochondrion inner membrane. It localises to the mitochondrion matrix. The protein resides in the cytoplasm. It carries out the reaction (6S)-5,6,7,8-tetrahydrofolyl-(gamma-L-Glu)(n) + L-glutamate + ATP = (6S)-5,6,7,8-tetrahydrofolyl-(gamma-L-Glu)(n+1) + ADP + phosphate + H(+). The protein operates within cofactor biosynthesis; tetrahydrofolylpolyglutamate biosynthesis. Catalyzes conversion of folates to polyglutamate derivatives allowing concentration of folate compounds in the cell and the intracellular retention of these cofactors, which are important substrates for most of the folate-dependent enzymes that are involved in one-carbon transfer reactions involved in purine, pyrimidine and amino acid synthesis. Required for methionine synthesis and maintenance of intact mitochondrial DNA. Involved in telomere maintenance. This is Folylpolyglutamate synthase from Saccharomyces cerevisiae (strain RM11-1a) (Baker's yeast).